The following is a 498-amino-acid chain: Glycerol kinase (498 aa).

Thr-12 contacts ADP. ATP is bound by residues Thr-12, Thr-13, and Ser-14. Thr-12 contributes to the sn-glycerol 3-phosphate binding site. An ADP-binding site is contributed by Arg-16. Sn-glycerol 3-phosphate is bound by residues Arg-82, Glu-83, and Tyr-134. Glycerol contacts are provided by Arg-82, Glu-83, and Tyr-134. Position 230 is a phosphohistidine; by HPr (His-230). Position 244 (Asp-244) interacts with sn-glycerol 3-phosphate. Glycerol-binding residues include Asp-244 and Gln-245. Thr-266 and Gly-309 together coordinate ADP. 4 residues coordinate ATP: Thr-266, Gly-309, Gln-313, and Gly-410. 2 residues coordinate ADP: Gly-410 and Asn-414.

The protein belongs to the FGGY kinase family. Homotetramer and homodimer (in equilibrium). In terms of processing, the phosphoenolpyruvate-dependent sugar phosphotransferase system (PTS), including enzyme I, and histidine-containing protein (HPr) are required for the phosphorylation, which leads to the activation of the enzyme.

It carries out the reaction glycerol + ATP = sn-glycerol 3-phosphate + ADP + H(+). It participates in polyol metabolism; glycerol degradation via glycerol kinase pathway; sn-glycerol 3-phosphate from glycerol: step 1/1. Its activity is regulated as follows. Activated by phosphorylation and inhibited by fructose 1,6-bisphosphate (FBP). Key enzyme in the regulation of glycerol uptake and metabolism. Catalyzes the phosphorylation of glycerol to yield sn-glycerol 3-phosphate. The polypeptide is Glycerol kinase (Staphylococcus aureus (strain MRSA252)).